The following is a 137-amino-acid chain: Small ribosomal subunit protein uS9c (137 aa).

Residues 106 to 137 (KSEGYLTRDPRVKERKKYGLKKARKAPQFSKR) are disordered. Residues 118–137 (KERKKYGLKKARKAPQFSKR) show a composition bias toward basic residues.

This sequence belongs to the universal ribosomal protein uS9 family.

The protein resides in the plastid. It localises to the chloroplast. This Pyropia yezoensis (Susabi-nori) protein is Small ribosomal subunit protein uS9c (rps9).